Consider the following 97-residue polypeptide: Co-chaperonin GroES (97 aa).

It belongs to the GroES chaperonin family. Heptamer of 7 subunits arranged in a ring. Interacts with the chaperonin GroEL.

The protein resides in the cytoplasm. Functionally, together with the chaperonin GroEL, plays an essential role in assisting protein folding. The GroEL-GroES system forms a nano-cage that allows encapsulation of the non-native substrate proteins and provides a physical environment optimized to promote and accelerate protein folding. GroES binds to the apical surface of the GroEL ring, thereby capping the opening of the GroEL channel. This Escherichia fergusonii (strain ATCC 35469 / DSM 13698 / CCUG 18766 / IAM 14443 / JCM 21226 / LMG 7866 / NBRC 102419 / NCTC 12128 / CDC 0568-73) protein is Co-chaperonin GroES.